Consider the following 166-residue polypeptide: Short form salivary protein D7R5 (166 aa).

The signal sequence occupies residues 1-22; it reads MEWRYFVVIALICPLIIVETLA. Cystine bridges form between cysteine 26–cysteine 58, cysteine 39–cysteine 166, and cysteine 98–cysteine 117.

Belongs to the PBP/GOBP family.

Its subcellular location is the secreted. In terms of biological role, in contrast to the related D7 salivary proteins, does not bind biogenic amines such as serotonin, noradrenaline, histamine and adrenaline. It is hypothesized that either D7r5 evolved an as yet unknown function or is becoming a pseudogene. This Anopheles gambiae (African malaria mosquito) protein is Short form salivary protein D7R5.